Consider the following 766-residue polypeptide: General transcription and DNA repair factor IIH helicase/translocase subunit XPB2 (766 aa).

The disordered stretch occupies residues 1-56 (MGNDERKRPTKKMKYGGKDDQKMKNIQNVEDYYDDADEDSRDGEGEEKRRDFTDLE). Acidic residues predominate over residues 31–41 (DYYDDADEDSR). Positions 42 to 56 (DGEGEEKRRDFTDLE) are enriched in basic and acidic residues. The Helicase ATP-binding domain maps to 293-455 (MFGNGRARSG…DLNFLIGPKL (163 aa)). 306–313 (LPCGAGKS) contributes to the ATP binding site. The DEVH box motif lies at 408-411 (DEVH). Residues 510–676 (RACEFLIRFH…SLPPPDAGSS (167 aa)) enclose the Helicase C-terminal domain. Residues 739–748 (SGRQKSGNQS) are compositionally biased toward polar residues. The segment at 739-766 (SGRQKSGNQSKKPKDPTKRHNIFKKRYV) is disordered. Residues 749 to 765 (KKPKDPTKRHNIFKKRY) carry the Nuclear localization signal motif. The span at 757–766 (RHNIFKKRYV) shows a compositional bias: basic residues.

This sequence belongs to the helicase family. RAD25/XPB subfamily. As to quaternary structure, component of the 7-subunit TFIIH core complex composed of XPB, XPD, TFB1/GTF2H1, GTF2H2/P44, TFB4/GTF2H3, TFB2/GTF2H4 and TFB5/GTF2H5, which is active in NER. The core complex associates with the 3-subunit CDK-activating kinase (CAK) module composed of CYCH1/cyclin H1, CDKD and MAT1/At4g30820 to form the 10-subunit holoenzyme (holo-TFIIH) active in transcription. Expressed ubiquitously.

It localises to the nucleus. It carries out the reaction Couples ATP hydrolysis with the unwinding of duplex DNA by translocating in the 3'-5' direction.. The catalysed reaction is ATP + H2O = ADP + phosphate + H(+). Functionally, ATP-dependent 3'-5' DNA helicase/translocase; binds dsDNA rather than ssDNA, unzipping it in a translocase rather than classical helicase activity. Component of the general transcription and DNA repair factor IIH (TFIIH) core complex. When complexed to CDK-activating kinase (CAK), involved in RNA transcription by RNA polymerase II. The ATPase activity of XPB/ERCC3, but not its helicase activity, is required for DNA opening; it may wrap around the damaged DNA wedging it open, causing localized melting and twisting that allows XPD/ERCC2 helicase to anchor. The ATP-dependent helicase activity of XPB/ERCC3 may be required for promoter escape. Also involved in transcription-coupled nucleotide excision repair (NER) of damaged DNA. In NER, TFIIH acts by opening DNA around the lesion to allow the excision of the damaged oligonucleotide and its replacement by a new DNA fragment. The structure of the TFIIH transcription complex differs from the NER-TFIIH complex. Partially complements UV sensitivity of a yeast SSL2 mutation. In Arabidopsis thaliana (Mouse-ear cress), this protein is General transcription and DNA repair factor IIH helicase/translocase subunit XPB2 (XPB2).